Consider the following 977-residue polypeptide: Zinc finger CCCH domain-containing protein 7B (977 aa).

3 TPR repeats span residues 1 to 27 (MERQ…KQEE), 36 to 69 (VQNL…ADYA), and 82 to 115 (CKLH…DSES). Ser217 is subject to Phosphoserine. Positions 248–256 (STDSLDDFS) match the LD motif; interaction with NSP3 motif. A phosphoserine mark is found at Ser364 and Ser367. The segment at 365–403 (FGSTRGSLDKPDSFMEETNSQDHRPPSGAQKPAPSPEPC) is disordered. C3H1-type zinc fingers lie at residues 484-508 (LCKD…HQEE), 616-638 (VCRH…HSFI), and 754-782 (PQQY…HSPE). The C2H2-type zinc finger occupies 842–866 (YHCWLCGKNSNSKKQWQQHIQSEKH). Residues 886–914 (MGEFRLCDRLQKGKACPDGDKCRCAHGQE) form a C3H1-type 4 zinc finger.

(Microbial infection) Interacts (via LD motif) with rotavirus A NSP3 (via the coiled-coil region).

The protein resides in the nucleus. Functionally, may be a specific regulator of miRNA biogenesis. Binds to microRNAs MIR7-1, MIR16-2 and MIR29A hairpins recognizing the 'ATA(A/T)' motif in the apical loop. In Homo sapiens (Human), this protein is Zinc finger CCCH domain-containing protein 7B (ZC3H7B).